The chain runs to 151 residues: 3-hydroxyacyl-[acyl-carrier-protein] dehydratase FabZ (151 aa).

His-54 is an active-site residue.

This sequence belongs to the thioester dehydratase family. FabZ subfamily.

The protein resides in the cytoplasm. The enzyme catalyses a (3R)-hydroxyacyl-[ACP] = a (2E)-enoyl-[ACP] + H2O. In terms of biological role, involved in unsaturated fatty acids biosynthesis. Catalyzes the dehydration of short chain beta-hydroxyacyl-ACPs and long chain saturated and unsaturated beta-hydroxyacyl-ACPs. The sequence is that of 3-hydroxyacyl-[acyl-carrier-protein] dehydratase FabZ from Blochmanniella pennsylvanica (strain BPEN).